The sequence spans 159 residues: Protein A40 (159 aa).

Residues 1 to 9 (MNKHKTDYA) lie on the Cytoplasmic side of the membrane. The chain crosses the membrane as a helical; Signal-anchor for type II membrane protein span at residues 10 to 30 (GYACCVICGLIVGIIFTATLL). Residues 31–159 (KVVERKLVHT…TPKLHSCYTI (129 aa)) lie on the Extracellular side of the membrane. Positions 63–159 (YNNKCIHLST…TPKLHSCYTI (97 aa)) constitute a C-type lectin domain.

The protein belongs to the poxviridae A40 protein family.

Its subcellular location is the host membrane. This is Protein A40 from Bos taurus (Bovine).